The following is a 199-amino-acid chain: GTP-binding protein Di-Ras2 (199 aa).

Residues 14–21 (GAGGVGKS), 33–39 (RESYIPT), 61–65 (DTTGS), and 121–124 (NKCD) contribute to the GTP site. Phosphoserine is present on Ser35. The Effector region motif lies at 36 to 44 (YIPTVEDTY). Ser126 is modified (phosphoserine). Position 152-153 (152-153 (AK)) interacts with GTP. Cys196 carries the post-translational modification Cysteine methyl ester. Cys196 carries S-geranylgeranyl cysteine lipidation. Positions 197–199 (VIM) are cleaved as a propeptide — removed in mature form.

This sequence belongs to the small GTPase superfamily. Di-Ras family. In terms of processing, ubiquitinated by the ECS(ASB11) complex via 'Lys-11'-linked ubiquitin chains, leading to its degradation by the proteasome.

The protein localises to the cell membrane. It carries out the reaction GTP + H2O = GDP + phosphate + H(+). In terms of biological role, displays low GTPase activity and exists predominantly in the GTP-bound form. This chain is GTP-binding protein Di-Ras2 (DIRAS2), found in Macaca fascicularis (Crab-eating macaque).